The chain runs to 469 residues: MVISESMDILFRIRGGLDLAFQLATPNEIFLKKALKHVLSDLSTKLSSNALVFRICHSSVYIWPSSDINTIPGELTDASACKNILRFIQFEPEEDIKRKFMRKKDKKLSDMHQIVNIDLMLEMSTSLAAVTPIIERESGGHHYVNMTLPVDAVISVAPEETWGKVRKLLVDAIHNQLTDMEKCILKYMKGTSIVVPEPLHFLLPGKKNLVTISYPSGIPDGQLQAYRKELHDLFNLPHDRPYFKRSNAYHFPDEPYKDGYIRNPHTYLNPPNMETGMIYVVQGIYGYHHYMQDRIDDNGWGCAYRSLQTICSWFKHQGYTERSIPTHREIQQALVDAGDKPATFVGSRQWIGSIEVQLVLNQLIGITSKILFVSQGSEIASQGRELANHFQSEGTPVMIGGGVLAHTILGVAWNEITGQIKFLILDPHYTGAEDLQVILEKGWCGWKGPDFWNKDAYYNLCLPQRPNMI.

N-acetylmethionine is present on Met1. Active-site residues include Cys302, Asp426, and His428.

It belongs to the peptidase C78 family. In terms of tissue distribution, expressed in brain.

The protein localises to the endoplasmic reticulum. It is found in the cytoplasm. Its subcellular location is the nucleus. Functionally, thiol-dependent isopeptidase that specifically cleaves UFM1, a ubiquitin-like modifier protein, from conjugated proteins, such as CD274/PD-L1, CYB5R3, DDRGK1, MRE11, RPL26/uL24, TRIP4 and RPL26/uL24. While it is also able to mediate the processing of UFM1 precursors, a prerequisite for conjugation reactions, UFSP2 mainly acts as a protein deUFMylase that mediates deconjugation of UFM1 from target proteins. Mediates deUFMylation of RPL26/uL24, a critical step to release the UFM1 ribosome E3 ligase (UREL) complex during the recycling of 60S ribosome subunits from the endoplasmic reticulum. Catalyzes deUFMylation of TRIP4, regulating intracellular nuclear receptors transactivation and thereby regulate cell proliferation and differentiation. This is Ufm1-specific protease 2 from Homo sapiens (Human).